The sequence spans 202 residues: Alpha-1-acid glycoprotein (202 aa).

An N-terminal signal peptide occupies residues 1–18 (MALLWALAVLSHLPLLDA). N-linked (GlcNAc...) asparagine glycans are attached at residues N34, N57, N94, N104, and N136. A disulfide bridge connects residues C91 and C184.

Belongs to the calycin superfamily. Lipocalin family.

It is found in the secreted. Functions as a transport protein in the blood stream. Binds various ligands in the interior of its beta-barrel domain. Appears to function in modulating the activity of the immune system during the acute-phase reaction. This Bos taurus (Bovine) protein is Alpha-1-acid glycoprotein (ORM1).